The following is a 511-amino-acid chain: Maturase K (511 aa).

The protein belongs to the intron maturase 2 family. MatK subfamily.

The protein localises to the plastid. It is found in the chloroplast. Usually encoded in the trnK tRNA gene intron. Probably assists in splicing its own and other chloroplast group II introns. In Chloranthus spicatus (Chulantree), this protein is Maturase K.